Here is a 469-residue protein sequence, read N- to C-terminus: 3-isopropylmalate dehydratase large subunit 1 (469 aa).

Residues cysteine 344, cysteine 404, and cysteine 407 each coordinate [4Fe-4S] cluster.

Belongs to the aconitase/IPM isomerase family. LeuC type 1 subfamily. Heterodimer of LeuC and LeuD. Requires [4Fe-4S] cluster as cofactor.

The enzyme catalyses (2R,3S)-3-isopropylmalate = (2S)-2-isopropylmalate. It participates in amino-acid biosynthesis; L-leucine biosynthesis; L-leucine from 3-methyl-2-oxobutanoate: step 2/4. In terms of biological role, catalyzes the isomerization between 2-isopropylmalate and 3-isopropylmalate, via the formation of 2-isopropylmaleate. The sequence is that of 3-isopropylmalate dehydratase large subunit 1 from Rubrobacter xylanophilus (strain DSM 9941 / JCM 11954 / NBRC 16129 / PRD-1).